The sequence spans 300 residues: Bifunctional protein FolD 2 (300 aa).

NADP(+)-binding positions include 165–167 (GRS), Ser-190, and Ile-231.

This sequence belongs to the tetrahydrofolate dehydrogenase/cyclohydrolase family. As to quaternary structure, homodimer.

The catalysed reaction is (6R)-5,10-methylene-5,6,7,8-tetrahydrofolate + NADP(+) = (6R)-5,10-methenyltetrahydrofolate + NADPH. The enzyme catalyses (6R)-5,10-methenyltetrahydrofolate + H2O = (6R)-10-formyltetrahydrofolate + H(+). It functions in the pathway one-carbon metabolism; tetrahydrofolate interconversion. Functionally, catalyzes the oxidation of 5,10-methylenetetrahydrofolate to 5,10-methenyltetrahydrofolate and then the hydrolysis of 5,10-methenyltetrahydrofolate to 10-formyltetrahydrofolate. This is Bifunctional protein FolD 2 from Pseudomonas savastanoi pv. phaseolicola (strain 1448A / Race 6) (Pseudomonas syringae pv. phaseolicola (strain 1448A / Race 6)).